A 151-amino-acid chain; its full sequence is Mediator of RNA polymerase II transcription subunit 32 (151 aa).

The tract at residues Gly128 to Gln151 is disordered.

The protein belongs to the mediator complex subunit 32 family. In terms of assembly, oligomers. Component of the Mediator complex. Interacts with MED6. Interacts with GEBPL.

It is found in the nucleus. Its function is as follows. Component of the Mediator complex, a coactivator involved in the regulated transcription of nearly all RNA polymerase II-dependent genes. Mediator functions as a bridge to convey information from gene-specific regulatory proteins to the basal RNA polymerase II transcription machinery. The Mediator complex, having a compact conformation in its free form, is recruited to promoters by direct interactions with regulatory proteins and serves for the assembly of a functional pre-initiation complex with RNA polymerase II and the general transcription factors. The polypeptide is Mediator of RNA polymerase II transcription subunit 32 (MED32) (Arabidopsis thaliana (Mouse-ear cress)).